The primary structure comprises 167 residues: U-scoloptoxin(08)-Er5a (167 aa).

The N-terminal stretch at 1 to 22 (MKTNCEFPLLCLLIVLVANVEG) is a signal peptide. Residues 23–94 (EVEDTGLKMV…KRLWRNWERR (72 aa)) constitute a propeptide that is removed on maturation. RLWRNWE repeat units follow at residues 34–40 (RLWRNWE), 61–67 (RLWRNWE), and 86–92 (RLWRNWE). Q95 is modified (pyrrolidone carboxylic acid). Residues 107–113 (ELWRNWE) form an RLWRNWE 4; approximate repeat. Positions 112–118 (WEDLKRR) are excised as a propeptide. Q119 carries the post-translational modification Pyrrolidone carboxylic acid. An RLWRNWE 5 repeat occupies 134-140 (RLWRNWE). Positions 139 to 167 (WEDNHATLRKRSADSLSRQKRLGKERGKE) are excised as a propeptide. The segment at 147–167 (RKRSADSLSRQKRLGKERGKE) is disordered.

Belongs to the scoloptoxin-08 family. In terms of tissue distribution, expressed by the venom gland.

It is found in the secreted. This is U-scoloptoxin(08)-Er5a from Ethmostigmus rubripes (Giant centipede).